Reading from the N-terminus, the 323-residue chain is o-succinylbenzoate synthase (323 aa).

Residue lysine 134 is the Proton donor of the active site. Residues aspartate 162, glutamate 191, and aspartate 214 each contribute to the Mg(2+) site. The active-site Proton acceptor is lysine 236.

It belongs to the mandelate racemase/muconate lactonizing enzyme family. MenC type 1 subfamily. Requires a divalent metal cation as cofactor.

It catalyses the reaction (1R,6R)-6-hydroxy-2-succinyl-cyclohexa-2,4-diene-1-carboxylate = 2-succinylbenzoate + H2O. The protein operates within quinol/quinone metabolism; 1,4-dihydroxy-2-naphthoate biosynthesis; 1,4-dihydroxy-2-naphthoate from chorismate: step 4/7. Its pathway is quinol/quinone metabolism; menaquinone biosynthesis. Converts 2-succinyl-6-hydroxy-2,4-cyclohexadiene-1-carboxylate (SHCHC) to 2-succinylbenzoate (OSB). This is o-succinylbenzoate synthase from Proteus mirabilis (strain HI4320).